We begin with the raw amino-acid sequence, 770 residues long: Transcription activator AMTR1 (770 aa).

A DNA-binding region (zn(2)-C6 fungal-type) is located at residues 7–34 (CLTCRQRKLKCDEKKPVCRQCAKASREC).

Its subcellular location is the nucleus. In terms of biological role, transcription factor that regulates the expression of the gene clusters that mediate the biosynthesis of AM-toxins, host-selective toxins (HSTs) causing Alternaria blotch on apple, a worldwide distributed disease. AM-toxins have two target sites for affecting susceptible apple cells; they cause invagination of the plasma membrane and electrolyte loss and chloroplast disorganization. This Alternaria alternata (Alternaria rot fungus) protein is Transcription activator AMTR1.